The sequence spans 325 residues: Probable isoaspartyl peptidase/L-asparaginase GA20639 (325 aa).

Threonine 184 serves as the catalytic Nucleophile. Residues 212–215 (RIGD) and 235–238 (TGHG) contribute to the substrate site.

Belongs to the Ntn-hydrolase family. Heterodimer of an alpha and beta chain produced by autocleavage. Post-translationally, cleaved into an alpha and beta chain by autocatalysis; this activates the enzyme. The N-terminal residue of the beta subunit is responsible for the nucleophile hydrolase activity.

It catalyses the reaction L-asparagine + H2O = L-aspartate + NH4(+). It carries out the reaction Cleavage of a beta-linked Asp residue from the N-terminus of a polypeptide.. Its function is as follows. Has both L-asparaginase and beta-aspartyl peptidase activity. Does not have aspartylglucosaminidase activity and is inactive toward GlcNAc-L-Asn. Likewise, has no activity toward glutamine. The chain is Probable isoaspartyl peptidase/L-asparaginase GA20639 from Drosophila pseudoobscura pseudoobscura (Fruit fly).